The sequence spans 350 residues: Ferredoxin--NADP reductase (350 aa).

Residues threonine 22, glutamate 41, glutamine 49, tyrosine 54, valine 94, phenylalanine 129, aspartate 295, and serine 336 each coordinate FAD.

This sequence belongs to the ferredoxin--NADP reductase type 2 family. Homodimer. The cofactor is FAD.

It catalyses the reaction 2 reduced [2Fe-2S]-[ferredoxin] + NADP(+) + H(+) = 2 oxidized [2Fe-2S]-[ferredoxin] + NADPH. This is Ferredoxin--NADP reductase from Chlorobium luteolum (strain DSM 273 / BCRC 81028 / 2530) (Pelodictyon luteolum).